A 169-amino-acid chain; its full sequence is Putative phosphoesterase SERP0604 (169 aa).

Histidine 34 functions as the Proton donor in the catalytic mechanism. Short sequence motifs (HXTX) lie at residues 34–37 (HITI) and 115–118 (HFTI). Histidine 115 functions as the Proton acceptor in the catalytic mechanism.

Belongs to the 2H phosphoesterase superfamily. YjcG family.

The protein is Putative phosphoesterase SERP0604 of Staphylococcus epidermidis (strain ATCC 35984 / DSM 28319 / BCRC 17069 / CCUG 31568 / BM 3577 / RP62A).